The sequence spans 108 residues: Somatoliberin (108 aa).

Residues 1 to 20 (MPLWVFFFVILTLSNSSHCS) form the signal peptide. Residues 21-31 (PPPPLTLRMRR) constitute a propeptide that is removed on maturation. Leu75 carries the post-translational modification Leucine amide. Residues 78–108 (QVDSMWAEQKQMELESILVALLQKHSRNSQG) constitute a propeptide that is removed on maturation.

This sequence belongs to the glucagon family.

It localises to the secreted. In terms of biological role, GRF is released by the hypothalamus and acts on the adenohypophyse to stimulate the secretion of growth hormone. The sequence is that of Somatoliberin (GHRH) from Homo sapiens (Human).